The following is a 266-amino-acid chain: Ribonuclease 3 (266 aa).

The tract at residues 1–35 (MMDESADIKPVPTSEDVAAPSGTEPVAPAPKKKRA) is disordered. Residues 43 to 171 (MAAIEQRLGH…VIGAVYLDGG (129 aa)) form the RNase III domain. Glu-84 contributes to the Mg(2+) binding site. Residue Asp-88 is part of the active site. Mg(2+) contacts are provided by Asp-157 and Glu-160. Residue Glu-160 is part of the active site. A DRBM domain is found at 196-265 (DPKTVLQEWA…ASAMIVREGV (70 aa)).

This sequence belongs to the ribonuclease III family. As to quaternary structure, homodimer. Requires Mg(2+) as cofactor.

It localises to the cytoplasm. It catalyses the reaction Endonucleolytic cleavage to 5'-phosphomonoester.. Its function is as follows. Digests double-stranded RNA. Involved in the processing of primary rRNA transcript to yield the immediate precursors to the large and small rRNAs (23S and 16S). Processes some mRNAs, and tRNAs when they are encoded in the rRNA operon. Processes pre-crRNA and tracrRNA of type II CRISPR loci if present in the organism. The polypeptide is Ribonuclease 3 (Nitrobacter winogradskyi (strain ATCC 25391 / DSM 10237 / CIP 104748 / NCIMB 11846 / Nb-255)).